The sequence spans 888 residues: Isoleucine--tRNA ligase (888 aa).

Residues 61-71 (PYANGSIHIGH) carry the 'HIGH' region motif. Residue Glu551 coordinates L-isoleucyl-5'-AMP. The short motif at 592 to 596 (KMSKQ) is the 'KMSKS' region element. Lys595 contributes to the ATP binding site. The Zn(2+) site is built by Cys862, Cys865, Cys879, and Cys882.

The protein belongs to the class-I aminoacyl-tRNA synthetase family. IleS type 1 subfamily. As to quaternary structure, monomer. Requires Zn(2+) as cofactor.

It is found in the cytoplasm. The catalysed reaction is tRNA(Ile) + L-isoleucine + ATP = L-isoleucyl-tRNA(Ile) + AMP + diphosphate. Its function is as follows. Catalyzes the attachment of isoleucine to tRNA(Ile). As IleRS can inadvertently accommodate and process structurally similar amino acids such as valine, to avoid such errors it has two additional distinct tRNA(Ile)-dependent editing activities. One activity is designated as 'pretransfer' editing and involves the hydrolysis of activated Val-AMP. The other activity is designated 'posttransfer' editing and involves deacylation of mischarged Val-tRNA(Ile). The protein is Isoleucine--tRNA ligase of Mycoplasmopsis pulmonis (strain UAB CTIP) (Mycoplasma pulmonis).